The primary structure comprises 337 residues: tRNA N6-adenosine threonylcarbamoyltransferase (337 aa).

Positions 114 and 118 each coordinate Fe cation. Substrate-binding positions include 136-140, Asp169, Gly182, Asp186, and Asn275; that span reads LVSGG. Asp301 serves as a coordination point for Fe cation.

The protein belongs to the KAE1 / TsaD family. The cofactor is Fe(2+).

The protein resides in the cytoplasm. It catalyses the reaction L-threonylcarbamoyladenylate + adenosine(37) in tRNA = N(6)-L-threonylcarbamoyladenosine(37) in tRNA + AMP + H(+). Its function is as follows. Required for the formation of a threonylcarbamoyl group on adenosine at position 37 (t(6)A37) in tRNAs that read codons beginning with adenine. Is involved in the transfer of the threonylcarbamoyl moiety of threonylcarbamoyl-AMP (TC-AMP) to the N6 group of A37, together with TsaE and TsaB. TsaD likely plays a direct catalytic role in this reaction. The protein is tRNA N6-adenosine threonylcarbamoyltransferase of Streptococcus uberis (strain ATCC BAA-854 / 0140J).